Reading from the N-terminus, the 376-residue chain is 1-deoxy-D-xylulose 5-phosphate reductoisomerase (376 aa).

Positions 10, 11, 12, 13, 36, 37, 38, and 118 each coordinate NADPH. Position 119 (Lys-119) interacts with 1-deoxy-D-xylulose 5-phosphate. Glu-120 is an NADPH binding site. Mn(2+) is bound at residue Asp-144. 1-deoxy-D-xylulose 5-phosphate contacts are provided by Ser-145, Glu-146, Ser-170, and His-193. Residue Glu-146 coordinates Mn(2+). Gly-199 contacts NADPH. 1-deoxy-D-xylulose 5-phosphate contacts are provided by Ser-206, Asn-211, Lys-212, and Glu-215. Residue Glu-215 participates in Mn(2+) binding.

Belongs to the DXR family. The cofactor is Mg(2+). Requires Mn(2+) as cofactor.

The enzyme catalyses 2-C-methyl-D-erythritol 4-phosphate + NADP(+) = 1-deoxy-D-xylulose 5-phosphate + NADPH + H(+). The protein operates within isoprenoid biosynthesis; isopentenyl diphosphate biosynthesis via DXP pathway; isopentenyl diphosphate from 1-deoxy-D-xylulose 5-phosphate: step 1/6. Catalyzes the NADPH-dependent rearrangement and reduction of 1-deoxy-D-xylulose-5-phosphate (DXP) to 2-C-methyl-D-erythritol 4-phosphate (MEP). In Macrococcus caseolyticus (strain JCSC5402) (Macrococcoides caseolyticum), this protein is 1-deoxy-D-xylulose 5-phosphate reductoisomerase.